Here is a 394-residue protein sequence, read N- to C-terminus: NAD(P)H-quinone oxidoreductase subunit H (394 aa).

This sequence belongs to the complex I 49 kDa subunit family. NDH-1 can be composed of about 15 different subunits; different subcomplexes with different compositions have been identified which probably have different functions.

The protein resides in the cellular thylakoid membrane. It carries out the reaction a plastoquinone + NADH + (n+1) H(+)(in) = a plastoquinol + NAD(+) + n H(+)(out). The catalysed reaction is a plastoquinone + NADPH + (n+1) H(+)(in) = a plastoquinol + NADP(+) + n H(+)(out). Functionally, NDH-1 shuttles electrons from an unknown electron donor, via FMN and iron-sulfur (Fe-S) centers, to quinones in the respiratory and/or the photosynthetic chain. The immediate electron acceptor for the enzyme in this species is believed to be plastoquinone. Couples the redox reaction to proton translocation, and thus conserves the redox energy in a proton gradient. Cyanobacterial NDH-1 also plays a role in inorganic carbon-concentration. This chain is NAD(P)H-quinone oxidoreductase subunit H, found in Synechococcus sp. (strain JA-3-3Ab) (Cyanobacteria bacterium Yellowstone A-Prime).